Here is a 361-residue protein sequence, read N- to C-terminus: Probable pectinesterase 49 (361 aa).

The first 22 residues, 1–22 (MGYISLALVALLVFFASPVVLA), serve as a signal peptide directing secretion. The N-linked (GlcNAc...) asparagine glycan is linked to Asn128. A substrate-binding site is contributed by Gln174. The active-site Proton donor is the Asp197. Catalysis depends on Asp218, which acts as the Nucleophile. 2 residues coordinate substrate: Arg275 and Trp277.

The protein belongs to the pectinesterase family. In terms of tissue distribution, expressed in flower buds.

The protein resides in the secreted. Its subcellular location is the cell wall. The enzyme catalyses [(1-&gt;4)-alpha-D-galacturonosyl methyl ester](n) + n H2O = [(1-&gt;4)-alpha-D-galacturonosyl](n) + n methanol + n H(+). Its pathway is glycan metabolism; pectin degradation; 2-dehydro-3-deoxy-D-gluconate from pectin: step 1/5. In terms of biological role, acts in the modification of cell walls via demethylesterification of cell wall pectin. The sequence is that of Probable pectinesterase 49 (PME49) from Arabidopsis thaliana (Mouse-ear cress).